We begin with the raw amino-acid sequence, 356 residues long: uncharacterized protein (356 aa).

A signal peptide spans 1–21; it reads MHWSRFVGIFLVFSVFSLVNC. The disordered stretch occupies residues 293–317; that stretch reads RPETDYEGANLPNIPSKKGSANQPV.

This is an uncharacterized protein from Acanthamoeba polyphaga mimivirus (APMV).